The following is a 237-amino-acid chain: (5-formylfuran-3-yl)methyl phosphate synthase (237 aa).

Lysine 27 functions as the Schiff-base intermediate with substrate in the catalytic mechanism. Lysine 85 functions as the Proton acceptor in the catalytic mechanism.

This sequence belongs to the MfnB family.

The catalysed reaction is 2 D-glyceraldehyde 3-phosphate = 4-(hydroxymethyl)-2-furancarboxaldehyde phosphate + phosphate + 2 H2O. Its pathway is cofactor biosynthesis; methanofuran biosynthesis. Functionally, catalyzes the formation of 4-(hydroxymethyl)-2-furancarboxaldehyde phosphate (4-HFC-P) from two molecules of glyceraldehyde-3-P (GA-3-P). This is (5-formylfuran-3-yl)methyl phosphate synthase from Methanobrevibacter smithii (strain ATCC 35061 / DSM 861 / OCM 144 / PS).